The chain runs to 1257 residues: Elongation factor 2 (1257 aa).

In terms of domain architecture, DOD-type homing endonuclease spans 273 to 402 (LAGLMFGDGC…LQLLLQKFDV (130 aa)). Residues 541-782 (VEEHHNFAAE…MVVKHLPDPV (242 aa)) enclose the tr-type G domain. GTP-binding positions include 616 to 620 (DTPGH) and 670 to 673 (NKVD). Residue His-1120 is modified to Diphthamide. The span at 1237 to 1250 (ERKGLKPEPPKPED) shows a compositional bias: basic and acidic residues. Positions 1237–1257 (ERKGLKPEPPKPEDYIEDYGG) are disordered.

It belongs to the TRAFAC class translation factor GTPase superfamily. Classic translation factor GTPase family. EF-G/EF-2 subfamily. In terms of processing, this protein undergoes a protein self splicing that involves a post-translational excision of the intervening region (intein) followed by peptide ligation.

The protein resides in the cytoplasm. Catalyzes the GTP-dependent ribosomal translocation step during translation elongation. During this step, the ribosome changes from the pre-translocational (PRE) to the post-translocational (POST) state as the newly formed A-site-bound peptidyl-tRNA and P-site-bound deacylated tRNA move to the P and E sites, respectively. Catalyzes the coordinated movement of the two tRNA molecules, the mRNA and conformational changes in the ribosome. This chain is Elongation factor 2, found in Methanopyrus kandleri (strain AV19 / DSM 6324 / JCM 9639 / NBRC 100938).